A 273-amino-acid chain; its full sequence is Gamma-glutamyl cyclotransferase aclK (273 aa).

The protein belongs to the class-I pyridoxal-phosphate-dependent aminotransferase family.

The enzyme catalyses an alpha-(gamma-L-glutamyl)-L-amino acid = 5-oxo-L-proline + an L-alpha-amino acid. The protein operates within mycotoxin biosynthesis. Functionally, gamma-glutamyl cyclotransferase; part of the gene cluster that mediates the biosynthesis of aspirochlorine (or antibiotic A30641), an unusual halogenated spiro compound with distinctive antifungal properties due to selective inhibition of protein biosynthesis, and which is also active against bacteria, viruses, and murine tumor cells. The non-ribosomal peptide synthetase (NRPS) aclP is responsible the formation of the diketopiperazine (DKP) core from the condensation of 2 phenylalanine residues. One Phe residue is tailored into chlorotyrosine by hydroxylation and chlorination, whereas the second Phe undergoes an unprecedented C-C bond cleavage to be converted into glycine. After formation of the DKP, sulfur is incorporated into the DKP by conjugation with glutathione by aclG, followed by its stepwise degradation to the thiol by aclI, aclJ and aclK, and the dithiol oxidation by aclT. In addition, oxygenases (aclB, aclC, aclL and aclO) and O-methyltransferases (aclM and aclU) act as tailoring enzymes to produce the intermediate dechloroaspirochlorine. Ultimately, chlorination of dechloroaspirochlorine by the halogenase aclH is the last step in the aspirochlorine pathway. The polypeptide is Gamma-glutamyl cyclotransferase aclK (Aspergillus oryzae (strain ATCC 42149 / RIB 40) (Yellow koji mold)).